Reading from the N-terminus, the 65-residue chain is Large ribosomal subunit protein bL33 (65 aa).

The tract at residues 20–42 (APASEKRSPGVSRYTTEKNRRNT) is disordered.

It belongs to the bacterial ribosomal protein bL33 family.

This is Large ribosomal subunit protein bL33 from Prochlorococcus marinus (strain SARG / CCMP1375 / SS120).